Here is a 464-residue protein sequence, read N- to C-terminus: E3 ubiquitin-protein ligase ITT1 (464 aa).

Residues 176 to 455 form a TRIAD supradomain region; the sequence is SNYHCCICME…EAYSGCYGRL (280 aa). C180, C183, C207, C210, C290, C300, C316, C319, C402, and C405 together coordinate Zn(2+). Residues 180 to 236 form an RING-type 1 zinc finger; sequence CCICMEMEKGVRMIKLPCENANVEHYLCRGCAKSYFTAMIQENRISSVRCPQCEYKE. An IBR-type zinc finger spans residues 267-338; that stretch reads DTELCERYEK…HAWHGYNNKC (72 aa). The segment at 402-431 adopts an RING-type 2; atypical zinc-finger fold; sequence CPKCKVVVERSEGCNKMKCEVCGTLFCFIC. C415 is a catalytic residue. 6 residues coordinate Zn(2+): C420, C423, C428, C431, H443, and C451.

Belongs to the RBR family. RNF14 subfamily. As to quaternary structure, interacts with translation release factors eRF1 (SUP45) and eRF3 (SUP35) in vitro.

The enzyme catalyses [E2 ubiquitin-conjugating enzyme]-S-ubiquitinyl-L-cysteine + [acceptor protein]-L-lysine = [E2 ubiquitin-conjugating enzyme]-L-cysteine + [acceptor protein]-N(6)-ubiquitinyl-L-lysine.. It functions in the pathway protein modification; protein ubiquitination. Functionally, E3 ubiquitin-protein ligase involved in translation quality control. Involved in the rescue of stalled ribosomes by promoting ubiquitination and degradation of proteins on stalled ribosomes. Specifically required to resolve RNA-protein cross-links caused by reactive aldehydes, which trigger translation stress by stalling ribosomes: acts by catalying 'Lys-6'-linked ubiquitination of RNA-protein cross-links, leading to their degradation. Interacts with the translation termination factors eRF1 (SUP45) and eRF3 (SUP35); overexpression decreases the efficiency of translation termination. This is E3 ubiquitin-protein ligase ITT1 from Saccharomyces cerevisiae (strain ATCC 204508 / S288c) (Baker's yeast).